We begin with the raw amino-acid sequence, 515 residues long: Bifunctional solanapyrone synthase (515 aa).

Positions 1-25 (MRLIILNLLSLGITPSVVGHSGPHR) are cleaved as a signal peptide. N-linked (GlcNAc...) asparagine glycosylation occurs at N66. The region spanning 91 to 261 (APKNPACIYT…THIVQRTYPL (171 aa)) is the FAD-binding PCMH-type domain. The residue at position 128 (H128) is a Pros-8alpha-FAD histidine. Residues N274 and N355 are each glycosylated (N-linked (GlcNAc...) asparagine).

The protein belongs to the oxygen-dependent FAD-linked oxidoreductase family. Requires FAD as cofactor.

It catalyses the reaction prosolanapyrone II + O2 = prosolanapyrone III + H2O2. The catalysed reaction is prosolanapyrone III = (-)-solanapyrone A. It carries out the reaction prosolanapyrone III = solanapyrone D. It participates in phytotoxin biosynthesis. Its function is as follows. Bifunctional solanapyrone synthase; part of the gene cluster that mediates the biosynthesis of the phytotoxin solanapyrone, a causal agent of early blight disease of potato and tomato. The prosolanapyrone synthase sol1 is a polyketide synthase that produces the octaketide desmethylprosolanapyrone I via sequential condensations of 7 malonyl-CoA units with one acetyl-CoA unit, and one methylation step. The octaketide backbone is further methylated by the sol2 O-methyltransferase to yield prosolanapyrone I. Prosolanapyrone I is hydroxylated to prosolanapyrone II by the cytochrome P450 monooxygenase sol6. The solanapyrone synthase sol5 then catalyzes the oxidation of prosolanapyrone II and the subsequent Diels Alder cycloisomerization of the product prosolanapyrone III to solanapyrones A and D. Solanapyrones A and D are then converted into solanapyrones B and E, respectively, by the sol3 dehydrogenase. This Alternaria solani protein is Bifunctional solanapyrone synthase (sol5).